Consider the following 325-residue polypeptide: Hydroxylase/desaturase poxK (325 aa).

Positions 1 to 12 (MTATATPVPTVA) are enriched in low complexity. Residues 1 to 25 (MTATATPVPTVASHAQDITLPPPPK) are disordered.

This sequence belongs to the asaB hydroxylase/desaturase family.

The protein operates within secondary metabolite biosynthesis. In terms of biological role, hydroxylase/desaturase; part of the gene cluster that mediates the biosynthesis of oxaleimides, cytotoxic compounds containing an unusual disubstituted succinimide moiety. The first step of the pathway is provided by the HR-PKS poxF that serves in a new mode of collaborative biosynthesis with the PKS-NRPS poxE, by providing the olefin containing amino acid substrate via the synthesis of an ACP-bound dec-4-enoate. The cytochrome P450 monooxygenase poxM-catalyzed oxidation at the alpha-position creates the enzyme-bound 2-hydroxydec-4-enoyl-ACP thioester, which may be prone to spontaneous hydrolysis to yield 2-hydroxydec-4-enoic acid due to increased electrophilicity of the carbonyl. 2-hydroxydec-4-enoic acid can then be further oxidized by poxM to yield the alpha-ketoacid 2-oxodec-4-enoicacid, which is reductively aminated by the aminotransferase poxL to yield (S,E)-2-aminodec-4-enoic acid. The Hybrid PKS-NRPS synthetase poxE then performs condensation between the octaketide product of its PKS modules and the amino group of (S,E)-2-aminodec-4-enoic acid which is activated and incorporated by the adenylation domain. The resulting aminoacyl product can be cyclized by the Diels-Alderase PoxQ and reductively released by the reductive (R) domain of poxE to yield an aldehyde intermediate. The released aldehyde is then substrate for a Knoevenagel condensation by the hydrolyase poxO followed by an oxidation at the 5-position of the pyrrolidone ring. The presence of the olefin from the amino acid building block allows for migration of the substituted allyl group to occur. This allylic transposition reaction takes place in a conjugate addition, semipinacol-like fashion to yield a succinimide intermediate. Iterative two-electron oxidations of the C7 methyl of the succinimide intermediate to the carboxylic acid can be catalyzed by one of two remaining cytochrome P450 monooxygenasess poxC or poxD to yield oxaleimide A. Subsequent oxidation yields the maleimide scaffold oxaleimide I. Both oxaleimide A and oxaleimide I can undergo oxidative modifications in the decalin ring to yield the series of products oxaleimides B to H. The protein is Hydroxylase/desaturase poxK of Penicillium oxalicum (strain 114-2 / CGMCC 5302) (Penicillium decumbens).